The sequence spans 129 residues: D-ribose pyranase (129 aa).

Catalysis depends on His-20, which acts as the Proton donor. Residues Asp-28, His-96, and 118–120 contribute to the substrate site; that span reads YAN.

The protein belongs to the RbsD / FucU family. RbsD subfamily. In terms of assembly, homodecamer.

It is found in the cytoplasm. It catalyses the reaction beta-D-ribopyranose = beta-D-ribofuranose. It functions in the pathway carbohydrate metabolism; D-ribose degradation; D-ribose 5-phosphate from beta-D-ribopyranose: step 1/2. Its function is as follows. Catalyzes the interconversion of beta-pyran and beta-furan forms of D-ribose. In Shouchella clausii (strain KSM-K16) (Alkalihalobacillus clausii), this protein is D-ribose pyranase.